A 359-amino-acid polypeptide reads, in one-letter code: Holliday junction branch migration complex subunit RuvB (359 aa).

Residues 1–187 form a large ATPase domain (RuvB-L) region; it reads MSGLEHGDAS…FGFTAHLEFY (187 aa). ATP contacts are provided by residues leucine 26, arginine 27, glycine 68, lysine 71, threonine 72, threonine 73, 134–136, arginine 177, tyrosine 187, and arginine 224; that span reads EDY. Threonine 72 contacts Mg(2+). The interval 188-257 is small ATPAse domain (RuvB-S); that stretch reads ETHELEQVIE…SVRAALDLYD (70 aa). Positions 260-359 are head domain (RuvB-H); sequence PLGLDRLDRA…VAGALFGDEL (100 aa). DNA is bound by residues arginine 315 and arginine 320.

This sequence belongs to the RuvB family. As to quaternary structure, homohexamer. Forms an RuvA(8)-RuvB(12)-Holliday junction (HJ) complex. HJ DNA is sandwiched between 2 RuvA tetramers; dsDNA enters through RuvA and exits via RuvB. An RuvB hexamer assembles on each DNA strand where it exits the tetramer. Each RuvB hexamer is contacted by two RuvA subunits (via domain III) on 2 adjacent RuvB subunits; this complex drives branch migration. In the full resolvosome a probable DNA-RuvA(4)-RuvB(12)-RuvC(2) complex forms which resolves the HJ.

It is found in the cytoplasm. The catalysed reaction is ATP + H2O = ADP + phosphate + H(+). In terms of biological role, the RuvA-RuvB-RuvC complex processes Holliday junction (HJ) DNA during genetic recombination and DNA repair, while the RuvA-RuvB complex plays an important role in the rescue of blocked DNA replication forks via replication fork reversal (RFR). RuvA specifically binds to HJ cruciform DNA, conferring on it an open structure. The RuvB hexamer acts as an ATP-dependent pump, pulling dsDNA into and through the RuvAB complex. RuvB forms 2 homohexamers on either side of HJ DNA bound by 1 or 2 RuvA tetramers; 4 subunits per hexamer contact DNA at a time. Coordinated motions by a converter formed by DNA-disengaged RuvB subunits stimulates ATP hydrolysis and nucleotide exchange. Immobilization of the converter enables RuvB to convert the ATP-contained energy into a lever motion, pulling 2 nucleotides of DNA out of the RuvA tetramer per ATP hydrolyzed, thus driving DNA branch migration. The RuvB motors rotate together with the DNA substrate, which together with the progressing nucleotide cycle form the mechanistic basis for DNA recombination by continuous HJ branch migration. Branch migration allows RuvC to scan DNA until it finds its consensus sequence, where it cleaves and resolves cruciform DNA. This Clavibacter michiganensis subsp. michiganensis (strain NCPPB 382) protein is Holliday junction branch migration complex subunit RuvB.